The sequence spans 382 residues: Galactokinase (382 aa).

34-37 (EHTD) is a binding site for substrate. 124-130 (GAGLSSS) is a binding site for ATP. Mg(2+)-binding residues include serine 130 and glutamate 162. Residue aspartate 174 is the Proton acceptor of the active site. Tyrosine 223 lines the substrate pocket.

It belongs to the GHMP kinase family. GalK subfamily.

It localises to the cytoplasm. It carries out the reaction alpha-D-galactose + ATP = alpha-D-galactose 1-phosphate + ADP + H(+). It participates in carbohydrate metabolism; galactose metabolism. Functionally, catalyzes the transfer of the gamma-phosphate of ATP to D-galactose to form alpha-D-galactose-1-phosphate (Gal-1-P). This Salmonella paratyphi C (strain RKS4594) protein is Galactokinase.